A 320-amino-acid polypeptide reads, in one-letter code: Cytochrome f (320 aa).

Positions 1–35 (MQNRNTFSWVKEQMTRFISVSIMIYVITRTSIANA) are cleaved as a signal peptide. 4 residues coordinate heme: Tyr-36, Cys-56, Cys-59, and His-60. Residues 286–306 (VQGLLFFLASVILAQIFLVLK) form a helical membrane-spanning segment.

This sequence belongs to the cytochrome f family. The 4 large subunits of the cytochrome b6-f complex are cytochrome b6, subunit IV (17 kDa polypeptide, petD), cytochrome f and the Rieske protein, while the 4 small subunits are PetG, PetL, PetM and PetN. The complex functions as a dimer. Heme is required as a cofactor.

It is found in the plastid. It localises to the chloroplast thylakoid membrane. Its function is as follows. Component of the cytochrome b6-f complex, which mediates electron transfer between photosystem II (PSII) and photosystem I (PSI), cyclic electron flow around PSI, and state transitions. The sequence is that of Cytochrome f from Acorus calamus (Sweet flag).